The chain runs to 132 residues: ATP synthase epsilon chain (132 aa).

Belongs to the ATPase epsilon chain family. In terms of assembly, F-type ATPases have 2 components, CF(1) - the catalytic core - and CF(0) - the membrane proton channel. CF(1) has five subunits: alpha(3), beta(3), gamma(1), delta(1), epsilon(1). CF(0) has four main subunits: a, b, b' and c.

Its subcellular location is the cellular chromatophore membrane. In terms of biological role, produces ATP from ADP in the presence of a proton gradient across the membrane. In Rhodobacter capsulatus (Rhodopseudomonas capsulata), this protein is ATP synthase epsilon chain (atpC).